The chain runs to 552 residues: MKLLSVLITFLLATVIYSQTNPATLTFTVQVYDQFPGYNNNFQTNGAGARVTGLIKSTLNSTTRVPELVSTATGGLNGVGLILNPSLFPYFFSPQQDSSLPGQNSPLSLDLVFTYDTTRNIYVYNNQNFFPIDNQGLDVDPAKRIYLNGATYHNYHFCMKMNTVFTYKGYEVFNFQGDDDVWVFINNKLVIDLGGVHGPLAASVDATTLGLTIGNSYNFDLFFCERQTVGSTIKIETNLLFVCPFEDYCGVCQGDGSSCCNPLTTCNDNNQCTIDSCPPANTTIGSGSISDYCIHTPKINTNPIDICFNYQCNSSTGNFDPIPIPCLDRSSECLSTIGCNSTVGCQYESICNSNVCNIQNQCSSNGTCVPKSSNDCGIELDGQVDKCKIYSCDSNGGVGCIKEDKCKPSEDKCHVVSCDSLTGSCITTPLEDPLAGLHLCSIARCNSSTGEFTYDPIICTPSSNPCISTQCNATNGQCYETQIPGDICDCGCGIPENKCKVSWCTPEGICQPKFKSEIDDNNSCTLDSCDPCTGIISHMTAPQCLSCNQCSN.

Positions 1-18 (MKLLSVLITFLLATVIYS) are cleaved as a signal peptide. N-linked (GlcNAc...) asparagine glycosylation is present at Asn60. A PA14 domain is found at 114 to 255 (TYDTTRNIYV…EDYCGVCQGD (142 aa)). 7 N-linked (GlcNAc...) asparagine glycosylation sites follow: Asn281, Asn313, Asn340, Asn365, Asn446, Asn472, and Asn521.

The protein belongs to the prespore-cell-inducing factor family.

The protein resides in the secreted. The chain is Protein psiB (psiB) from Dictyostelium discoideum (Social amoeba).